A 324-amino-acid chain; its full sequence is uncharacterized protein (324 aa).

9 helical membrane-spanning segments follow: residues 34–54, 76–96, 103–123, 127–147, 158–178, 198–218, 243–263, 275–295, and 297–317; these read MAVL…FYVL, VFMA…NVGL, IYQM…TTLL, IGQL…IVGY, PILG…QFTI, GTYG…FIGS, YVIS…GLAI, LDIA…MESF, and LLQF…HSII.

The protein localises to the membrane. This is an uncharacterized protein from Schizosaccharomyces pombe (strain 972 / ATCC 24843) (Fission yeast).